The primary structure comprises 620 residues: 1-deoxy-D-xylulose-5-phosphate synthase (620 aa).

Thiamine diphosphate is bound by residues His-80 and 121–123; that span reads GHS. A Mg(2+)-binding site is contributed by Asp-152. Residues 153–154, Asn-181, Tyr-288, and Glu-370 each bind thiamine diphosphate; that span reads GA. Asn-181 contributes to the Mg(2+) binding site.

The protein belongs to the transketolase family. DXPS subfamily. As to quaternary structure, homodimer. Requires Mg(2+) as cofactor. The cofactor is thiamine diphosphate.

It catalyses the reaction D-glyceraldehyde 3-phosphate + pyruvate + H(+) = 1-deoxy-D-xylulose 5-phosphate + CO2. The protein operates within metabolic intermediate biosynthesis; 1-deoxy-D-xylulose 5-phosphate biosynthesis; 1-deoxy-D-xylulose 5-phosphate from D-glyceraldehyde 3-phosphate and pyruvate: step 1/1. In terms of biological role, catalyzes the acyloin condensation reaction between C atoms 2 and 3 of pyruvate and glyceraldehyde 3-phosphate to yield 1-deoxy-D-xylulose-5-phosphate (DXP). In Salmonella arizonae (strain ATCC BAA-731 / CDC346-86 / RSK2980), this protein is 1-deoxy-D-xylulose-5-phosphate synthase.